Here is a 257-residue protein sequence, read N- to C-terminus: Phosphonates import ATP-binding protein PhnC (257 aa).

The region spanning 4-248 is the ABC transporter domain; sequence IEFKDVSKVY…VFNHIYGRSI (245 aa).

Belongs to the ABC transporter superfamily. Phosphonates importer (TC 3.A.1.9.1) family. In terms of assembly, the complex is composed of two ATP-binding proteins (PhnC), two transmembrane proteins (PhnE) and a solute-binding protein (PhnD).

The protein localises to the cell membrane. It catalyses the reaction phosphonate(out) + ATP + H2O = phosphonate(in) + ADP + phosphate + H(+). Its function is as follows. Part of the ABC transporter complex PhnCDE involved in phosphonates import. Responsible for energy coupling to the transport system. The chain is Phosphonates import ATP-binding protein PhnC from Staphylococcus epidermidis (strain ATCC 35984 / DSM 28319 / BCRC 17069 / CCUG 31568 / BM 3577 / RP62A).